A 121-amino-acid chain; its full sequence is ORF8 protein (121 aa).

Positions 1–15 are cleaved as a signal peptide; sequence MKFLVFLGIITTVAA. Residues 19–121 enclose the SARS ORF8 Ig-like domain; it reads ECSLQSCTQH…HDVRVVLDFI (103 aa). 3 cysteine pairs are disulfide-bonded: Cys25-Cys90, Cys37-Cys102, and Cys61-Cys83. An N-linked (GlcNAc...) (complex) asparagine; by host glycan is attached at Asn78.

Homodimer. Interacts with host IL17RA. Interacts with host IL17RC. Interacts with host MHC-I. In terms of processing, glycosylated by the host when secreted via the conventional pathway. The glycosylated form cannot bind IL17A and would not participate in the cytokine storm.

Its subcellular location is the secreted. Functionally, plays a role in modulating the host immune response. May act as a secreted virokine by mimicking interleukin-17A (IL17A), and thereby binding to the IL17RA receptor, leading to activation of the IL17 pathway and increased secretion of pro-inflammatory factors. Contributes to the cytokine storm during SARS-CoV-2 infection when secreted by unconventional pathway. May act by down-regulating major histocompability complex class I (MHC-I) at cell surface. May inhibit expression of some members of the IFN-stimulated gene (ISG) family including hosts IGF2BP1/ZBP1, MX1 and MX2, and DHX58. The sequence is that of ORF8 protein from Severe acute respiratory syndrome coronavirus 2 (2019-nCoV).